The sequence spans 1155 residues: PAN2-PAN3 deadenylation complex catalytic subunit pan2 (1155 aa).

WD repeat units lie at residues 102-145 (THED…DKLP) and 276-315 (ANVS…HFNE). The tract at residues 316 to 452 (MSKEVEFADV…GTKLNGEAED (137 aa)) is linker. In terms of domain architecture, USP spans 453–822 (DPLLKYSNVE…VPCVLAYQVK (370 aa)). The Exonuclease domain occupies 871-1049 (VALDTEFVDL…IEDARMALRL (179 aa)). Residues aspartate 874, glutamate 876, aspartate 983, and aspartate 1042 each contribute to the a divalent metal cation site. Residues 1095–1155 (TAVTMQNNSG…GDFFGGSPLK (61 aa)) are disordered. The segment covering 1097 to 1106 (VTMQNNSGRN) has biased composition (polar residues). Low complexity predominate over residues 1107 to 1124 (TPSTPEVTAPTASAPTTP).

This sequence belongs to the peptidase C19 family. PAN2 subfamily. In terms of assembly, forms a heterotrimer with an asymmetric homodimer of the regulatory subunit pan3 to form the poly(A)-nuclease (PAN) deadenylation complex. It depends on a divalent metal cation as a cofactor.

It is found in the cytoplasm. The catalysed reaction is Exonucleolytic cleavage of poly(A) to 5'-AMP.. Positively regulated by the regulatory subunit pan3. Its function is as follows. Catalytic subunit of the poly(A)-nuclease (PAN) deadenylation complex, one of two cytoplasmic mRNA deadenylases involved in mRNA turnover. PAN specifically shortens poly(A) tails of RNA and the activity is stimulated by poly(A)-binding protein pab1. PAN deadenylation is followed by rapid degradation of the shortened mRNA tails by the CCR4-NOT complex. Deadenylated mRNAs are then degraded by two alternative mechanisms, namely exosome-mediated 3'-5' exonucleolytic degradation, or deadenylation-dependent mRNA decaping and subsequent 5'-3' exonucleolytic degradation by xrn1. May also be involved in post-transcriptional maturation of mRNA poly(A) tails. This chain is PAN2-PAN3 deadenylation complex catalytic subunit pan2, found in Aspergillus oryzae (strain ATCC 42149 / RIB 40) (Yellow koji mold).